The sequence spans 359 residues: Elongation factor Ts 1, mitochondrial (359 aa).

A compositionally biased stretch (low complexity) spans 323–341; the sequence is GKAAPAPKAEEPAAVAPAK. A disordered region spans residues 323 to 345; it reads GKAAPAPKAEEPAAVAPAKADAE.

Belongs to the EF-Ts family.

The protein resides in the mitochondrion. In terms of biological role, associates with the EF-Tu.GDP complex and induces the exchange of GDP to GTP. It remains bound to the aminoacyl-tRNA.EF-Tu.GTP complex up to the GTP hydrolysis stage on the ribosome. This Thalassiosira pseudonana (Marine diatom) protein is Elongation factor Ts 1, mitochondrial.